A 343-amino-acid polypeptide reads, in one-letter code: SUMO-activating enzyme subunit aos-1 (343 aa).

It belongs to the ubiquitin-activating E1 family. In terms of assembly, heterodimer of aos-1 and uba-2.

The protein operates within protein modification; protein sumoylation. The dimeric enzyme acts as an E1 ligase for smo-1. It mediates ATP-dependent activation of smo-1 and formation of a thioester with a conserved cysteine residue on uba-2. This Caenorhabditis elegans protein is SUMO-activating enzyme subunit aos-1 (aos-1).